A 208-amino-acid chain; its full sequence is ATP synthase subunit beta, chloroplastic (208 aa).

Belongs to the ATPase alpha/beta chains family. As to quaternary structure, F-type ATPases have 2 components, CF(1) - the catalytic core - and CF(0) - the membrane proton channel. CF(1) has five subunits: alpha(3), beta(3), gamma(1), delta(1), epsilon(1). CF(0) has four main subunits: a(1), b(1), b'(1) and c(9-12).

The protein localises to the plastid. It is found in the chloroplast thylakoid membrane. The catalysed reaction is ATP + H2O + 4 H(+)(in) = ADP + phosphate + 5 H(+)(out). In terms of biological role, produces ATP from ADP in the presence of a proton gradient across the membrane. The catalytic sites are hosted primarily by the beta subunits. This chain is ATP synthase subunit beta, chloroplastic (atpB), found in Lonchitis hirsuta (Tomato fern).